Here is a 405-residue protein sequence, read N- to C-terminus: uncharacterized protein (405 aa).

Residues M1–G20 form the signal peptide. Residue C21 is modified to N-acetylcysteine. Residue C21 is the site of S-archaeol cysteine attachment.

Belongs to the BMP lipoprotein family.

It localises to the cell membrane. This is an uncharacterized protein from Pyrococcus horikoshii (strain ATCC 700860 / DSM 12428 / JCM 9974 / NBRC 100139 / OT-3).